We begin with the raw amino-acid sequence, 88 residues long: Small ribosomal subunit protein bS20 (88 aa).

Residues 1–27 (MANSKSAKKRALQSEKRRQHNASRRSM) are disordered.

Belongs to the bacterial ribosomal protein bS20 family.

In terms of biological role, binds directly to 16S ribosomal RNA. The sequence is that of Small ribosomal subunit protein bS20 from Shewanella woodyi (strain ATCC 51908 / MS32).